The following is a 211-amino-acid chain: Thymidylate kinase (211 aa).

10–17 (GPDGAGKT) is an ATP binding site.

The protein belongs to the thymidylate kinase family.

It carries out the reaction dTMP + ATP = dTDP + ADP. Functionally, phosphorylation of dTMP to form dTDP in both de novo and salvage pathways of dTTP synthesis. The protein is Thymidylate kinase of Lactococcus lactis subsp. cremoris (strain SK11).